The following is a 154-amino-acid chain: UPF0178 protein Sala_2376 (154 aa).

Belongs to the UPF0178 family.

This chain is UPF0178 protein Sala_2376, found in Sphingopyxis alaskensis (strain DSM 13593 / LMG 18877 / RB2256) (Sphingomonas alaskensis).